The primary structure comprises 256 residues: Major prion protein (256 aa).

A signal peptide spans 1–24; it reads MVKSHIGSWILVLFVAMWSDVGLC. The interval 25–233 is interaction with GRB2, ERI3 and SYN1; it reads KKRPKPGGGW…ESQAYYQRGA (209 aa). The segment at 28-110 is disordered; it reads PKPGGGWNTG…QWNKPSKPKT (83 aa). 5 tandem repeats follow at residues 54–62, 63–70, 71–78, 79–86, and 87–95. Residues 54–95 form a 5 X 8 AA tandem repeats of P-H-G-G-G-W-G-Q region; that stretch reads PQGGGGWGQPHGGGWGQPHGGGWGQPHGGGWGQPHGGGGWGQ. A compositionally biased stretch (gly residues) spans 55–97; that stretch reads QGGGGWGQPHGGGWGQPHGGGWGQPHGGGWGQPHGGGGWGQGG. Positions 64, 65, 66, 72, 73, 74, 80, 81, 82, 88, 90, and 91 each coordinate Cu(2+). C182 and C217 are joined by a disulfide. N-linked (GlcNAc...) asparagine glycosylation is found at N184 and N200. The GPI-anchor amidated alanine moiety is linked to residue A233. A propeptide spans 234 to 256 (removed in mature form); that stretch reads SVILFSSPPVILLISFLIFLIVG.

Belongs to the prion family. As to quaternary structure, monomer and homodimer. Has a tendency to aggregate into amyloid fibrils containing a cross-beta spine, formed by a steric zipper of superposed beta-strands. Soluble oligomers may represent an intermediate stage on the path to fibril formation. Copper binding may promote oligomerization. Interacts with GRB2, APP, ERI3/PRNPIP and SYN1. Mislocalized cytosolically exposed PrP interacts with MGRN1; this interaction alters MGRN1 subcellular location and causes lysosomal enlargement. Interacts with KIAA1191.

The protein localises to the cell membrane. It is found in the golgi apparatus. Functionally, its primary physiological function is unclear. Has cytoprotective activity against internal or environmental stresses. May play a role in neuronal development and synaptic plasticity. May be required for neuronal myelin sheath maintenance. May play a role in iron uptake and iron homeostasis. Soluble oligomers are toxic to cultured neuroblastoma cells and induce apoptosis (in vitro). Association with GPC1 (via its heparan sulfate chains) targets PRNP to lipid rafts. Also provides Cu(2+) or Zn(2+) for the ascorbate-mediated GPC1 deaminase degradation of its heparan sulfate side chains. This Odocoileus hemionus (Mule deer) protein is Major prion protein (PRNP).